A 116-amino-acid chain; its full sequence is Fluoride-specific ion channel FluC 1 (116 aa).

A run of 4 helical transmembrane segments spans residues 1-21, 32-52, 54-74, and 93-113; these read MYAP…RYLV, FPLG…WLAG, GAAD…FTTF, and VVVY…LGYH. The Na(+) site is built by Gly-69 and Thr-72.

This sequence belongs to the fluoride channel Fluc/FEX (TC 1.A.43) family.

It is found in the cell membrane. It carries out the reaction fluoride(in) = fluoride(out). With respect to regulation, na(+) is not transported, but it plays an essential structural role and its presence is essential for fluoride channel function. Its function is as follows. Fluoride-specific ion channel. Important for reducing fluoride concentration in the cell, thus reducing its toxicity. The chain is Fluoride-specific ion channel FluC 1 from Geobacillus kaustophilus (strain HTA426).